The following is a 730-amino-acid chain: MYSTNPGSWVTFDDDPAFQSSQKRKDFSLETQGVCRPNGLKLTLPTLRDPPSTPSSASSTPLSSPMVDFYFSPGPPSNSPLSTPTKDFPGFPGIPKAGTHVLYPIPECSSSSAPTTAGGVGPPLLLTKPDCSPHVSLPSSHSHTQPTPTLGFTEDAGPQRVQSEARQFEYFQDHCAFSNPFWKDEGSASPFPLDSLASRKPFSPKDKEVPIGHKSLTQCSLDYICEKLEHLHSAETQDPLGDLSMQDPYAGDTVSFVPHSLFRSQPRAGWSFMLRIPEKKNMMSSRQWGPIFLKVLPGGILQMYYEKGLEKPFKEFQLDPHCRLSEPKLENFSMAGKIHTVKVEHVSYSEKRKYHAKTEVVHEPEVEQMLKLGSTEHRDFLEFLTTVEEELIKLPATAKPKNKSYEEQEICLDIQDSLWGKVTKEGQLVESAVVTQICCLCFLNGPAECFLALNDRELQKRDECYFEKEPEKKGIAILDYHFHTCVKAEEFEQSRIIKFVPLDACRFELMRFKTSYEAGELPFAVKSVVTVQGAYVELQAFVNMTPAAQGSPHAGALRSCNNIMIHFPVPAQWIKALWTRNLQRQKSLKAKMNRRACLGSLQEPESEPVIQVTVGSAKYESAYRAVVWKIDRLPDKNSSPDQPHCLSYKLELGSDQEVPSDWYPFATVQFSMLEACASRTEVRSLGVESDAQPQKHVCQRACYNIQVEIEKKWIQVDGEDADKTGGCVTQ.

Disordered stretches follow at residues 1–26 (MYST…KRKD), 38–83 (NGLK…PLST), and 132–159 (SPHV…AGPQ). Composition is skewed to low complexity over residues 54–65 (PSSASSTPLSSP) and 132–143 (SPHVSLPSSHSH). Positions 269-402 (GWSFMLRIPE…KLPATAKPKN (134 aa)) constitute an SHD domain. An MHD domain is found at 407-710 (EQEICLDIQD…ACYNIQVEIE (304 aa)).

The protein belongs to the Stoned B family.

Its subcellular location is the cytoplasm. The protein resides in the membrane. May be involved in the endocytic machinery. The chain is Stonin-1 (Ston1) from Mus musculus (Mouse).